Reading from the N-terminus, the 294-residue chain is Phosphatidylserine decarboxylase proenzyme (294 aa).

Residues D92, H149, and S252 each act as charge relay system; for autoendoproteolytic cleavage activity in the active site. The Schiff-base intermediate with substrate; via pyruvic acid; for decarboxylase activity role is filled by S252. The residue at position 252 (S252) is a Pyruvic acid (Ser); by autocatalysis.

The protein belongs to the phosphatidylserine decarboxylase family. PSD-B subfamily. Prokaryotic type I sub-subfamily. In terms of assembly, heterodimer of a large membrane-associated beta subunit and a small pyruvoyl-containing alpha subunit. It depends on pyruvate as a cofactor. Is synthesized initially as an inactive proenzyme. Formation of the active enzyme involves a self-maturation process in which the active site pyruvoyl group is generated from an internal serine residue via an autocatalytic post-translational modification. Two non-identical subunits are generated from the proenzyme in this reaction, and the pyruvate is formed at the N-terminus of the alpha chain, which is derived from the carboxyl end of the proenzyme. The autoendoproteolytic cleavage occurs by a canonical serine protease mechanism, in which the side chain hydroxyl group of the serine supplies its oxygen atom to form the C-terminus of the beta chain, while the remainder of the serine residue undergoes an oxidative deamination to produce ammonia and the pyruvoyl prosthetic group on the alpha chain. During this reaction, the Ser that is part of the protease active site of the proenzyme becomes the pyruvoyl prosthetic group, which constitutes an essential element of the active site of the mature decarboxylase.

It is found in the cell membrane. The enzyme catalyses a 1,2-diacyl-sn-glycero-3-phospho-L-serine + H(+) = a 1,2-diacyl-sn-glycero-3-phosphoethanolamine + CO2. It functions in the pathway phospholipid metabolism; phosphatidylethanolamine biosynthesis; phosphatidylethanolamine from CDP-diacylglycerol: step 2/2. Functionally, catalyzes the formation of phosphatidylethanolamine (PtdEtn) from phosphatidylserine (PtdSer). In Bordetella avium (strain 197N), this protein is Phosphatidylserine decarboxylase proenzyme.